The primary structure comprises 61 residues: Beta-insect depressant toxin BotIT5 (61 aa).

In terms of domain architecture, LCN-type CS-alpha/beta spans 1 to 61; sequence DGYIRKRDGC…TWKSETNTCG (61 aa). Cystine bridges form between cysteine 10/cysteine 60, cysteine 14/cysteine 35, cysteine 21/cysteine 42, and cysteine 25/cysteine 44. Glycine 61 bears the Glycine amide mark.

Belongs to the long (4 C-C) scorpion toxin superfamily. Sodium channel inhibitor family. Beta subfamily. In terms of tissue distribution, expressed by the venom gland.

The protein resides in the secreted. Depressant insect beta-toxins cause a transient contraction paralysis followed by a slow flaccid paralysis. They bind voltage-independently at site-4 of sodium channels (Nav) and shift the voltage of activation toward more negative potentials thereby affecting sodium channel activation and promoting spontaneous and repetitive firing. This toxin is active only on insects. The protein is Beta-insect depressant toxin BotIT5 of Buthus occitanus tunetanus (Common European scorpion).